A 765-amino-acid polypeptide reads, in one-letter code: Putative maltooligosyl trehalose synthase (765 aa).

It belongs to the glycosyl hydrolase 13 family. Monomer.

The enzyme catalyses 4-[(1-&gt;4)-alpha-D-glucosyl](n-1)-D-glucose = 1-[(1-&gt;4)-alpha-D-glucosyl](n-1)-alpha-D-glucose. In terms of biological role, catalyzes the conversion of maltooligosaccharide into the non-reducing saccharide, maltooligosyl trehalose (alpha-maltooligosyl alpha-D-glucoside) by intramolecular transglycosylation. This Mycobacterium tuberculosis (strain CDC 1551 / Oshkosh) protein is Putative maltooligosyl trehalose synthase (treY).